Here is an 829-residue protein sequence, read N- to C-terminus: Leucine--tRNA ligase (829 aa).

A 'HIGH' region motif is present at residues 34-44 (PYPSGNIHMGH). Positions 591 to 595 (KMSKS) match the 'KMSKS' region motif. K594 contributes to the ATP binding site.

It belongs to the class-I aminoacyl-tRNA synthetase family.

Its subcellular location is the cytoplasm. The catalysed reaction is tRNA(Leu) + L-leucine + ATP = L-leucyl-tRNA(Leu) + AMP + diphosphate. The sequence is that of Leucine--tRNA ligase from Ehrlichia canis (strain Jake).